The following is a 1481-amino-acid chain: Cystic fibrosis transmembrane conductance regulator (1481 aa).

The Cytoplasmic segment spans residues 1-77; the sequence is MQRSPLEKAS…KLINALRRCF (77 aa). Residues 78–98 traverse the membrane as a helical segment; the sequence is FWRFMFYGIILYLGEVTKAVQ. In terms of domain architecture, ABC transmembrane type-1 1 spans 81–365; that stretch reads FMFYGIILYL…WAVQTWYDSL (285 aa). Residues 99–122 lie on the Extracellular side of the membrane; that stretch reads PLLLGRIIASYDPDNKVERSIAIY. The helical transmembrane segment at 123–146 threads the bilayer; that stretch reads LGIGLCLLFIVRTLLLHPAIFGLH. The Cytoplasmic segment spans residues 147–195; it reads HIGMQMRIAMFSLIYKKTLKLSSRVLDKISIGQLVSLLSNNLNKFDEGL. Residues 196-216 traverse the membrane as a helical segment; the sequence is ALAHFVWIAPLQVTLLMGLLW. Topologically, residues 217–222 are extracellular; the sequence is ELLQAF. A helical transmembrane segment spans residues 223 to 243; sequence TFCGLAFLIVLALLQAGLGKM. At 244 to 298 the chain is on the cytoplasmic side; it reads MMKYRDQRAGKINERLVITSEMIENIQSVKAYCWEEAMEKIIENLRQTELKLTRK. The helical transmembrane segment at 299 to 319 threads the bilayer; it reads AAYVRYLNSSAFFFSGFFVVF. The Extracellular segment spans residues 320–339; that stretch reads LSVLPYALLKGIILRKIFTT. Residues 340-358 traverse the membrane as a helical segment; it reads ISFCIVLRMAVTRQFPWAV. The Cytoplasmic segment spans residues 359-858; that stretch reads QTWYDSLGAI…YLRYITVHKS (500 aa). ATP-binding positions include Trp-401, 457 to 464, and Gln-492; that span reads GSTGAGKT. Residues 423 to 645 enclose the ABC transporter 1 domain; that stretch reads NGDNSLFFSN…RPDFSSKLMG (223 aa). Cys-523 carries S-palmitoyl cysteine lipidation. A Phosphoserine modification is found at Ser-548. Residues 653–831 are disordered R region; the sequence is TAERRNSIIT…EEINEEDLRD (179 aa). 2 positions are modified to phosphoserine; by PKA: Ser-659 and Ser-669. Phosphoserine; by PKC is present on Ser-685. Lys-687 participates in a covalent cross-link: Glycyl lysine isopeptide (Lys-Gly) (interchain with G-Cter in ubiquitin). Ser-699 is modified (phosphoserine; by PKA). Ser-711 bears the Phosphoserine mark. The residue at position 716 (Thr-716) is a Phosphothreonine. Phosphoserine; by PKA is present on residues Ser-736 and Ser-767. Ser-790 carries the post-translational modification Phosphoserine; by PKC. Ser-795 and Ser-813 each carry phosphoserine; by PKA. The chain crosses the membrane as a helical span at residues 859–879; the sequence is LMFVLIWCLVVFLVEVAASLV. The ABC transmembrane type-1 2 domain maps to 859–1155; the sequence is LMFVLIWCLV…AVNSSIDVDS (297 aa). Residues 880–918 lie on the Extracellular side of the membrane; it reads VLCLFPKIFFQDKGNSTKSANNSYAVIITSTSSYYIFYI. N-linked (GlcNAc...) asparagine glycans are attached at residues Asn-894 and Asn-900. The discontinuously helical transmembrane segment at 919-939 threads the bilayer; that stretch reads YVGVADTLLALGLFRGLPLVH. Residues 940–990 lie on the Cytoplasmic side of the membrane; that stretch reads TLITVSKTLHHKMLQSVLQAPMSTLNTLKTGGILNRFSKDIAVLDDLLPLT. Residues 991–1011 traverse the membrane as a helical segment; it reads IFDFVQLLLIVIGAVVVVSVL. Topologically, residues 1012 to 1013 are extracellular; the sequence is QP. Residues 1014–1034 form a helical membrane-spanning segment; that stretch reads YIFLATVPVIAAFILLRAYFL. Topologically, residues 1035–1095 are cytoplasmic; sequence HTSQQLKQLE…TANWFLYLST (61 aa). The helical transmembrane segment at 1096–1116 threads the bilayer; sequence LRWFQMRIEMIFVIFFIAVTF. Residues 1117–1130 are Extracellular-facing; that stretch reads ISILTTGEGEGRVG. The chain crosses the membrane as a helical span at residues 1131 to 1151; sequence IILTLAMNIMGTLQWAVNSSI. The Cytoplasmic segment spans residues 1152–1481; that stretch reads DVDSLMRSVS…TEEEVQETKL (330 aa). An ABC transporter 2 domain is found at 1211 to 1444; the sequence is MTVKDLTAKY…KSLFRQAISP (234 aa). Residues Tyr-1220 and 1245-1252 each bind ATP; that span reads GRTGSGKS. Residues 1387–1481 are interaction with GORASP2; the sequence is RTLKQAFANC…TEEEVQETKL (95 aa). Cys-1396 carries the S-palmitoyl cysteine lipid modification. Residues 1453–1481 are disordered; sequence HRNSSRQRSRSNIAALKEETEEEVQETKL. At Ser-1457 the chain carries Phosphoserine. Acidic residues predominate over residues 1471–1481; sequence ETEEEVQETKL. Residues 1479–1481 carry the PDZ-binding motif; sequence TKL.

This sequence belongs to the ABC transporter superfamily. ABCC family. CFTR transporter (TC 3.A.1.202) subfamily. Monomer; does not require oligomerization for channel activity. May form oligomers in the membrane. Interacts with SLC26A3, SLC26A6 and NHERF1. Interacts with SHANK2. Interacts with MYO6. Interacts (via C-terminus) with GOPC (via PDZ domain); this promotes CFTR internalization and thereby decreases channel activity. Interacts with SLC4A7 through NHERF1. Found in a complex with MYO5B and RAB11A. Interacts with ANO1. Interacts with SLC26A8. Interacts with AHCYL1; the interaction increases CFTR activity. Interacts with CSE1L. The core-glycosylated form interacts with GORASP2 (via PDZ GRASP-type 1 domain) in respone to ER stress. Interacts with MARCHF2; the interaction leads to CFTR ubiqtuitination and degradation. Interacts with ADGRG2. Post-translationally, N-glycosylated. Phosphorylated; cAMP treatment promotes phosphorylation and activates the channel. Dephosphorylation decreases the ATPase activity (in vitro). Phosphorylation at PKA sites activates the channel. Phosphorylation at PKC sites enhances the response to phosphorylation by PKA. Phosphorylated by AMPK; this inhibits channel activity. In terms of processing, ubiquitinated, leading to its degradation in the lysosome. Deubiquitination by USP10 in early endosomes enhances its endocytic recycling to the cell membrane. Ubiquitinated by RNF185 during ER stress. Ubiquitinated by MARCHF2.

The protein localises to the apical cell membrane. Its subcellular location is the early endosome membrane. It is found in the cell membrane. The protein resides in the recycling endosome membrane. It localises to the endoplasmic reticulum membrane. The protein localises to the nucleus. The catalysed reaction is ATP + H2O + closed Cl(-) channel = ADP + phosphate + open Cl(-) channel.. It catalyses the reaction chloride(in) = chloride(out). It carries out the reaction hydrogencarbonate(in) = hydrogencarbonate(out). The enzyme catalyses ATP + H2O = ADP + phosphate + H(+). In terms of biological role, epithelial ion channel that plays an important role in the regulation of epithelial ion and water transport and fluid homeostasis. Mediates the transport of chloride ions across the cell membrane. Possesses an intrinsic ATPase activity and utilizes ATP to gate its channel; the passive flow of anions through the channel is gated by cycles of ATP binding and hydrolysis by the ATP-binding domains. The ion channel is also permeable to HCO(3)(-); selectivity depends on the extracellular chloride concentration. Exerts its function also by modulating the activity of other ion channels and transporters. Contributes to the regulation of the pH and the ion content of the epithelial fluid layer. Modulates the activity of the epithelial sodium channel (ENaC) complex, in part by regulating the cell surface expression of the ENaC complex. May regulate bicarbonate secretion and salvage in epithelial cells by regulating the transporter SLC4A7. Can inhibit the chloride channel activity of ANO1. Plays a role in the chloride and bicarbonate homeostasis during sperm epididymal maturation and capacitation. This chain is Cystic fibrosis transmembrane conductance regulator, found in Bos taurus (Bovine).